Here is a 533-residue protein sequence, read N- to C-terminus: Receptor homology region, transmembrane domain- and RING domain-containing protein 1 (533 aa).

The signal sequence occupies residues 1 to 26; sequence MNRRRTMLLLICLCATFCLMTQLGAA. Residues 27 to 167 lie on the Lumenal side of the membrane; that stretch reads NVVLMGTNLT…LPAFENSAWS (141 aa). The N-linked (GlcNAc...) asparagine glycan is linked to Asn34. A disulfide bridge links Cys68 with Cys91. In terms of domain architecture, PA spans 84–145; sequence ALIIRGGCTF…ISKASGEVLK (62 aa). A helical transmembrane segment spans residues 168–188; sequence IMAISFISLLAMSAVLATCFF. Over 189-533 the chain is Cytoplasmic; it reads VRRHHIRRDR…MASAQSLPGC (345 aa). The RING-type; atypical zinc-finger motif lies at 236-278; sequence CAICLEDYNVGEKLRVLPCRHKFHAACVDLWLTTWRTFCPVCK. 2 disordered regions span residues 309–329 and 440–476; these read SFRS…PSSQ and LRRC…LAGA. The segment covering 448–463 has biased composition (polar residues); the sequence is PSLSTMAPQSPQQSQL.

It localises to the prevacuolar compartment membrane. It is found in the protein storage vacuole membrane. Its subcellular location is the golgi apparatus membrane. In terms of biological role, involved in the trafficking of vacuolar proteins. Functions probably as a sorting receptor for protein trafficking to the protein storage vacuole (PSV) by binding the C-terminal vacuolar sorting determinant (VSD) of vacuolar-sorted proteins. The sequence is that of Receptor homology region, transmembrane domain- and RING domain-containing protein 1 from Oryza sativa subsp. japonica (Rice).